The sequence spans 97 residues: Small ribosomal subunit protein bS20 (97 aa).

The protein belongs to the bacterial ribosomal protein bS20 family.

Its function is as follows. Binds directly to 16S ribosomal RNA. In Gloeothece citriformis (strain PCC 7424) (Cyanothece sp. (strain PCC 7424)), this protein is Small ribosomal subunit protein bS20.